Consider the following 439-residue polypeptide: C4-dicarboxylate transport protein (439 aa).

The next 9 helical transmembrane spans lie at 10–30 (LYVQ…FYPP), 45–65 (LIKM…IAGM), 77–97 (LALL…LVLV), 145–165 (AFAK…GFAL), 185–205 (VLFA…FGAM), 223–243 (LMGT…GTIT), 290–310 (VVGL…AIYL), 332–352 (TLLA…GSGF), and 353–373 (IVLA…LALI). Residues 415 to 439 (LNGQTAEEASAPQALPDRMESRIHH) form a disordered region.

The protein belongs to the dicarboxylate/amino acid:cation symporter (DAACS) (TC 2.A.23) family.

Its subcellular location is the cell inner membrane. Responsible for the transport of dicarboxylates such as succinate, fumarate, and malate from the periplasm across the membrane. This Verminephrobacter eiseniae (strain EF01-2) protein is C4-dicarboxylate transport protein.